A 448-amino-acid polypeptide reads, in one-letter code: Probable glycine dehydrogenase (decarboxylating) subunit 1 (448 aa).

Belongs to the GcvP family. N-terminal subunit subfamily. As to quaternary structure, the glycine cleavage system is composed of four proteins: P, T, L and H. In this organism, the P 'protein' is a heterodimer of two subunits.

It catalyses the reaction N(6)-[(R)-lipoyl]-L-lysyl-[glycine-cleavage complex H protein] + glycine + H(+) = N(6)-[(R)-S(8)-aminomethyldihydrolipoyl]-L-lysyl-[glycine-cleavage complex H protein] + CO2. In terms of biological role, the glycine cleavage system catalyzes the degradation of glycine. The P protein binds the alpha-amino group of glycine through its pyridoxal phosphate cofactor; CO(2) is released and the remaining methylamine moiety is then transferred to the lipoamide cofactor of the H protein. This chain is Probable glycine dehydrogenase (decarboxylating) subunit 1, found in Caulobacter vibrioides (strain ATCC 19089 / CIP 103742 / CB 15) (Caulobacter crescentus).